A 249-amino-acid chain; its full sequence is (2S)-[(R)-hydroxy(phenyl)methyl]succinyl-CoA dehydrogenase subunit BbsC (249 aa).

It belongs to the short-chain dehydrogenases/reductases (SDR) family. Heterotetramer composed of 2 inactive BbsC subunits and 2 active BbsD subunits.

Its pathway is xenobiotic degradation; toluene degradation. Its function is as follows. Involved in an anaerobic toluene degradation pathway. Catalytically inactive subunit, which is probably required for the structural and/or regulatory integrity of the catalytic subunit BbsD. This subunit cannot bind NAD(+) or substrate. The polypeptide is (2S)-[(R)-hydroxy(phenyl)methyl]succinyl-CoA dehydrogenase subunit BbsC (Thauera aromatica).